The primary structure comprises 251 residues: MTDSATANGDDRDPEIELFVKAGIDGESIGNCPFSQRLFMILWLKGVVFNVTTVDLKRKPADLHNLAPGTHPPFLTFNGDVKTDVNKIEEFLEETLTPEKYPKLAARHRESNTAGIDIFSKFSAYIKNTKQQNNAALERGLTKALRKLDDYLNTPLPEEIDTNTHGDEKGSQRKFLDGDELTLADCNLLPKLHVVKIVAKKYRNYDIPAEMTGLWRYLKNAYARDEFTNTCAADSEIELAYADVARRLSRS.

Positions 1–98 (MTDSATANGD…EEFLEETLTP (98 aa)) are required for insertion into the membrane. The short motif at 32 to 35 (CPFS) is the G-site element. A helical membrane pass occupies residues 34–54 (FSQRLFMILWLKGVVFNVTTV). The region spanning 101–241 (YPKLAARHRE…AADSEIELAY (141 aa)) is the GST C-terminal domain.

The protein belongs to the chloride channel CLIC family. As to quaternary structure, component of a multimeric complex consisting of several cytoskeletal proteins, including actin, ezrin, alpha-actinin, gelsolin, and IQGAP1. Interacts with AKAP9. Interacts with TPRN. TPRN, CLIC5 and PTPQR form concentric rings at the base of stereocilia and may form a complex. Interacts with EZR, MYO6 and RDX; the proteins may work together as a complex to stabilize linkages between the plasma membrane and subjacent actin cytoskeleton at the stereocilium base. As to expression, detected in cochlea, in cochlear and vestibular hair cell bundles in the organ of Corti (at protein level). Expressed neonatal and adult cardiomyocytes (at protein level).

It is found in the golgi apparatus. The protein resides in the cytoplasm. The protein localises to the cytoskeleton. Its subcellular location is the microtubule organizing center. It localises to the centrosome. It is found in the cell cortex. The protein resides in the membrane. The protein localises to the apical cell membrane. Its subcellular location is the mitochondrion. It localises to the cell projection. It is found in the stereocilium. It carries out the reaction Na(+)(in) = Na(+)(out). The catalysed reaction is K(+)(in) = K(+)(out). The enzyme catalyses chloride(in) = chloride(out). With respect to regulation, inhibited by F-actin. In terms of biological role, in the soluble state, catalyzes glutaredoxin-like thiol disulfide exchange reactions with reduced glutathione as electron donor. Can insert into membranes and form non-selective ion channels almost equally permeable to Na(+), K(+) and Cl(-). Required for normal hearing. It is necessary for the formation of stereocilia in the inner ear and normal development of the organ of Corti. May play a role in the regulation of transepithelial ion absorption and secretion. Is required for the development and/or maintenance of the proper glomerular endothelial cell and podocyte architecture. Plays a role in formation of the lens suture in the eye, which is important for normal optical properties of the lens. In Rattus norvegicus (Rat), this protein is Chloride intracellular channel protein 5 (Clic5).